A 358-amino-acid polypeptide reads, in one-letter code: NADH-quinone oxidoreductase subunit H (358 aa).

8 helical membrane-spanning segments follow: residues Ile-30–Met-50, Phe-96–Ile-116, Val-129–Gly-149, Ile-168–Thr-188, Gly-201–Ala-221, Phe-265–Ile-285, Ile-297–Ile-317, and Tyr-336–Phe-356.

The protein belongs to the complex I subunit 1 family. In terms of assembly, NDH-1 is composed of 14 different subunits. Subunits NuoA, H, J, K, L, M, N constitute the membrane sector of the complex.

The protein localises to the cell inner membrane. The enzyme catalyses a quinone + NADH + 5 H(+)(in) = a quinol + NAD(+) + 4 H(+)(out). NDH-1 shuttles electrons from NADH, via FMN and iron-sulfur (Fe-S) centers, to quinones in the respiratory chain. The immediate electron acceptor for the enzyme in this species is believed to be ubiquinone. Couples the redox reaction to proton translocation (for every two electrons transferred, four hydrogen ions are translocated across the cytoplasmic membrane), and thus conserves the redox energy in a proton gradient. This subunit may bind ubiquinone. This Bacteroides thetaiotaomicron (strain ATCC 29148 / DSM 2079 / JCM 5827 / CCUG 10774 / NCTC 10582 / VPI-5482 / E50) protein is NADH-quinone oxidoreductase subunit H.